Here is a 286-residue protein sequence, read N- to C-terminus: Deaminated glutathione amidase (286 aa).

The CN hydrolase domain occupies 4-252; the sequence is ANVALLQLCS…VSALKVKIET (249 aa). Residue glutamate 42 is the Proton acceptor of the active site. Residue lysine 115 is part of the active site. Cysteine 157 serves as the catalytic Nucleophile.

It belongs to the carbon-nitrogen hydrolase superfamily. NIT1/NIT2 family.

The catalysed reaction is N-(4-oxoglutaryl)-L-cysteinylglycine + H2O = L-cysteinylglycine + 2-oxoglutarate. Functionally, hydrolyzes deaminated glutathione (dGSH, 2-oxoglutaramate) to alpha-ketoglutarate (alpha-KG) and cysteinylglycine (specific activity 6.50 umol/min/mg), has less activity against alpha-ketoglutaramate (a-KGM, specific activity 0.20 umol/min/mg), very little activity on glutathione and none on L-glutamine. May function as a metabolite repair enzyme. In Yersinia enterocolitica, this protein is Deaminated glutathione amidase.